The primary structure comprises 293 residues: Lymphocyte antigen 6 complex locus protein G6f (293 aa).

A signal peptide spans 1-19 (MAMVVFLLLYLCGHPQAAA). The 105-residue stretch at 20–124 (DNIQTLYVPS…HKYQNWRVYD (105 aa)) folds into the Ig-like V-type domain. The Extracellular segment spans residues 20-237 (DNIQTLYVPS…APLPSWDVSW (218 aa)). Residues Cys-37 and Cys-108 are joined by a disulfide bond. Asn-90 carries an N-linked (GlcNAc...) asparagine glycan. Residues 238 to 258 (ILMLLFAAGQGVTIIALSIVI) form a helical membrane-spanning segment. Residues 259–293 (WRHQRAQGTQDREPSIPHFKPEVQVYENIHLARLR) are Cytoplasmic-facing. Residue Tyr-284 is modified to Phosphotyrosine.

As to quaternary structure, homodimer; disulfide-linked. Interacts with GRB2 and GRB7 in a phosphorylation-dependent manner. In terms of processing, N-glycosylated.

It is found in the cell membrane. Its function is as follows. May play a role in the downstream signal transduction pathways involving GRB2 and GRB7. The protein is Lymphocyte antigen 6 complex locus protein G6f (Ly6g6f) of Rattus norvegicus (Rat).